The sequence spans 255 residues: 5-oxoprolinase subunit A (255 aa).

Belongs to the LamB/PxpA family. In terms of assembly, forms a complex composed of PxpA, PxpB and PxpC.

It carries out the reaction 5-oxo-L-proline + ATP + 2 H2O = L-glutamate + ADP + phosphate + H(+). Its function is as follows. Catalyzes the cleavage of 5-oxoproline to form L-glutamate coupled to the hydrolysis of ATP to ADP and inorganic phosphate. This is 5-oxoprolinase subunit A from Campylobacter jejuni subsp. jejuni serotype O:2 (strain ATCC 700819 / NCTC 11168).